We begin with the raw amino-acid sequence, 427 residues long: ATP-dependent RNA helicase DDX39A (427 aa).

The span at 1 to 19 shows a compositional bias: acidic residues; the sequence is MAEQDVENDLLDYDEEEEP. The tract at residues 1 to 34 is disordered; it reads MAEQDVENDLLDYDEEEEPQAPQESTPAPPKKDI. N-acetylalanine is present on Ala-2. Lys-31 participates in a covalent cross-link: Glycyl lysine isopeptide (Lys-Gly) (interchain with G-Cter in SUMO2). At Lys-35 the chain carries N6-acetyllysine; alternate. Lys-35 is covalently cross-linked (Glycyl lysine isopeptide (Lys-Gly) (interchain with G-Cter in SUMO2); alternate). Phosphoserine is present on Ser-37. The Q motif signature appears at 44–72; the sequence is SGFRDFLLKPELLRAIVDCGFEHPSEVQH. Positions 75–248 constitute a Helicase ATP-binding domain; that stretch reads IPQAILGMDV…RKFMQDPMEV (174 aa). 88–95 contacts ATP; that stretch reads AKSGMGKT. Glycyl lysine isopeptide (Lys-Gly) (interchain with G-Cter in SUMO2) cross-links involve residues Lys-154 and Lys-162. The residue at position 171 (Thr-171) is a Phosphothreonine. Residues 195–198 carry the DECD box motif; the sequence is DECD. Residues Lys-240 and Lys-255 each participate in a glycyl lysine isopeptide (Lys-Gly) (interchain with G-Cter in SUMO2) cross-link. The region spanning 260-421 is the Helicase C-terminal domain; that stretch reads GLQQYYVKLK…ELPEEIDIST (162 aa). Residue Ser-426 is modified to Phosphoserine.

It belongs to the DEAD box helicase family. DECD subfamily. In terms of assembly, binds ALYREF/THOC4 and DDX39B/BAT1. Interacts with the apo-AREX complex component SARNP. Interacts with MX1. Interacts with MCM3AP isoform GANP. Interacts with ECD. Interacts with PHAX; this interaction stimulates PHAX RNA binding activity. (Microbial infection) Interacts with human cytomegalovirus/HHV-5 protein UL69. Post-translationally, SUMOylated by RANBP2; SUMOylation modification affects its ability to bind RNA. Detected in testis, and at lower levels in brain, kidney, lung, thymus, spleen and salivary gland.

It localises to the nucleus. The protein resides in the cytoplasm. The enzyme catalyses ATP + H2O = ADP + phosphate + H(+). Functionally, helicase that plays an essential role in mRNA export and is involved in multiple steps in RNA metabolism including alternative splicing. Regulates nuclear mRNA export to the cytoplasm through association with ECD. Also involved in spliceosomal uridine-rich small nuclear RNA (U snRNA) export by stimulating the RNA binding of adapter PHAX. Plays a role in the negative regulation of type I IFN production by increasing the nuclear retention of antiviral transcripts and thus reducing their protein expression. Independently of the interferon pathway, plays an antiviral role against alphaviruses by binding to a 5' conserved sequence element in the viral genomic RNA. This Homo sapiens (Human) protein is ATP-dependent RNA helicase DDX39A (DDX39A).